The primary structure comprises 492 residues: Catalase isozyme C (492 aa).

Heme is bound at residue Arg62. His65 is a catalytic residue. Arg102 is a binding site for heme. Asn138 is an active-site residue. Phe151 contacts heme. Tyr210 bears the Phosphotyrosine; by STRK1 mark. Residues 325–348 constitute a cross-link (3-(S-cysteinyl)-tyrosine (Cys-Tyr)); the sequence is CPGIIVPGIYYSDDKLLQTRIFSY. 3 residues coordinate heme: Arg344, Tyr348, and Arg355. Positions 484–492 match the Peroxisome targeting signal motif; it reads SRLSAKPSM.

Belongs to the catalase family. In terms of assembly, homotetramer. Interacts with GLO1 and GLO4; these interactions are disturbed by alpha-hydroxy-2-pyridinemethanesulfonic acid (HPMS) and salicylic acid (SA). Interacts with STRK1 at the plasma membrane. It depends on heme as a cofactor. In terms of processing, activated by STRK1-mediated phosphorylation at Tyr-210 upon salt and oxidative stress. In terms of tissue distribution, highly expressed in mature leaves. Mainly expressed in leaf blades, stems, panicles, leaf sheaths, and culms, but barely in roots.

It is found in the peroxisome. The protein localises to the glyoxysome. The protein resides in the cell membrane. The catalysed reaction is 2 H2O2 = O2 + 2 H2O. With respect to regulation, strongly inhibited by beta-mercaptoethanol, sodium azide and potassium cyanide. Slightly repressed by 3-amino-1,2,4-triazole (3-AT). Activity is repressed proportionally to increased concentration of NaCl, KCl, LiCl and MgCl(2). Occurs in almost all aerobically respiring organisms and serves to protect cells from the toxic effects of hydrogen peroxide. Responsible for the redox homeostasis in leaves. Prevents nitric oxide (NO) accumulation and subsequent NO-mediated leaf cell death as well as the S-nitrosylation of specific proteins (e.g. glyceraldehyde 3-phosphate dehydrogenase and thioredoxin) by degrading H(2)O(2). Involved in photorespiration. Promotes drought stress tolerance and recovery. Involved in NO-mediated enhanced tolerance to zinc oxide nanoparticles (ZnO NPs)-induced phytotoxicity. Participates in melatonin-mediated detoxification. This is Catalase isozyme C from Oryza sativa subsp. japonica (Rice).